The following is a 314-amino-acid chain: DNA-directed RNA polymerase subunit alpha (314 aa).

The alpha N-terminal domain (alpha-NTD) stretch occupies residues 1–228; it reads MIEIEKPNIE…EHLNIFVGLT (228 aa). The interval 245–314 is alpha C-terminal domain (alpha-CTD); the sequence is KEKVLEMTIE…ELGLGLRNEE (70 aa).

This sequence belongs to the RNA polymerase alpha chain family. As to quaternary structure, homodimer. The RNAP catalytic core consists of 2 alpha, 1 beta, 1 beta' and 1 omega subunit. When a sigma factor is associated with the core the holoenzyme is formed, which can initiate transcription.

The catalysed reaction is RNA(n) + a ribonucleoside 5'-triphosphate = RNA(n+1) + diphosphate. Its function is as follows. DNA-dependent RNA polymerase catalyzes the transcription of DNA into RNA using the four ribonucleoside triphosphates as substrates. This is DNA-directed RNA polymerase subunit alpha from Shouchella clausii (strain KSM-K16) (Alkalihalobacillus clausii).